A 500-amino-acid chain; its full sequence is Carnosic acid synthase (500 aa).

Residues 4–24 (LILLSLAFLASCVVAYSRRRP) form a helical membrane-spanning segment. Residue Cys443 participates in heme binding.

The protein belongs to the cytochrome P450 family. Heme is required as a cofactor. As to expression, expressed in leaf glandular trichomes.

It localises to the membrane. It catalyses the reaction 11-hydroxyferruginol + 3 reduced [NADPH--hemoprotein reductase] + 3 O2 = carnosate + 3 oxidized [NADPH--hemoprotein reductase] + 4 H2O + 4 H(+). The enzyme catalyses miltiradiene + 2 reduced [NADPH--hemoprotein reductase] + 2 O2 = miltiradien-20-al + 2 oxidized [NADPH--hemoprotein reductase] + 3 H2O + 2 H(+). The catalysed reaction is ferruginol + 3 reduced [NADPH--hemoprotein reductase] + 3 O2 = pisiferate + 3 oxidized [NADPH--hemoprotein reductase] + 4 H2O + 4 H(+). The protein operates within secondary metabolite biosynthesis; terpenoid biosynthesis. Monooxygenase involved in the biosynthesis of carnosate, a potent antioxidant labdane-related diterpene natural product. Catalyzes the oxidation of 11-hydroxyferruginol to produce carnosate. Mediates the conversion of miltiradien into miltiradien-20-al. Also involved in the production of pisiferic acid and derivative products from ferruginol. The sequence is that of Carnosic acid synthase from Salvia pomifera (Apple sage).